The primary structure comprises 306 residues: Serrate RNA effector molecule homolog (306 aa).

Residues 1 to 28 (HKEEELLGSSGGPPPEEPPKEGNPAEIN) are disordered. Thr-101 is modified (phosphothreonine). At Ser-109 the chain carries Phosphoserine. A disordered region spans residues 251-284 (GPPYPHGPYGAGRGNYDAFRGQGGYPGKPRNRMV). Omega-N-methylarginine is present on residues Arg-263, Arg-270, and Arg-280.

It belongs to the ARS2 family. Interacts with CASP8AP2, ERBB4, NCBP1/CBP80 and DROSHA. Interacts with LUZP4. Interacts with NCBP2/CBP20 and NCBP3.

It is found in the nucleus. The protein resides in the nucleoplasm. It localises to the cytoplasm. In terms of biological role, acts as a mediator between the cap-binding complex (CBC) and the primary microRNAs (miRNAs) processing machinery during cell proliferation. Contributes to the stability and delivery of capped primary miRNA transcripts to the primary miRNA processing complex containing DGCR8 and DROSHA, thereby playing a role in RNA-mediated gene silencing (RNAi) by miRNAs. Binds capped RNAs (m7GpppG-capped RNA); however interaction is probably mediated via its interaction with NCBP1/CBP80 component of the CBC complex. Involved in cell cycle progression at S phase. Does not directly confer arsenite resistance but rather modulates arsenic sensitivity. Independently of its activity on miRNAs, necessary and sufficient to promote neural stem cell self-renewal. Does so by directly binding SOX2 promoter and positively regulating its transcription. This is Serrate RNA effector molecule homolog (SRRT) from Cricetulus griseus (Chinese hamster).